Reading from the N-terminus, the 34-residue chain is Calcitonin-like peptide 2 (34 aa).

A disulfide bridge links C2 with C7. F34 is modified (phenylalanine amide).

This Odorrana schmackeri (Schmacker's frog) protein is Calcitonin-like peptide 2.